Here is a 554-residue protein sequence, read N- to C-terminus: Solute carrier family 22 member 1 (554 aa).

The Cytoplasmic portion of the chain corresponds to M1–T21. The helical transmembrane segment at F22–L42 threads the bilayer. At G43–D149 the chain is on the extracellular side. N71 is a glycosylation site (N-linked (GlcNAc...) asparagine). Residues L150 to A170 traverse the membrane as a helical segment. Over D171–K176 the chain is Cytoplasmic. A helical membrane pass occupies residues L177 to P197. The Extracellular segment spans residues D198 to R206. The chain crosses the membrane as a helical span at residues L207–G229. The Cytoplasmic segment spans residues S230–A237. Residues I238 to I258 form a helical membrane-spanning segment. Residues P259–R262 are Extracellular-facing. The chain crosses the membrane as a helical span at residues W263–P283. The short motif at P283 to R287 is the Proline-rich sequence element. The Cytoplasmic portion of the chain corresponds to E284–T347. S333 carries the post-translational modification Phosphoserine. The helical transmembrane segment at F348–M368 threads the bilayer. At G369–N374 the chain is on the extracellular side. A helical transmembrane segment spans residues V375–V395. Residues T396–R402 lie on the Cytoplasmic side of the membrane. The chain crosses the membrane as a helical span at residues I403–V423. Residues P424–T431 are Extracellular-facing. Residues I432 to V452 form a helical membrane-spanning segment. Residues N453–L464 are Cytoplasmic-facing. Residues G465–F485 form a helical membrane-spanning segment. The Extracellular portion of the chain corresponds to R486–Q492. The chain crosses the membrane as a helical span at residues P493 to L513. Residues P514–P554 lie on the Cytoplasmic side of the membrane.

It belongs to the major facilitator (TC 2.A.1) superfamily. Organic cation transporter (TC 2.A.1.19) family. Phosphorylated. As to expression, expressed in kidney, liver and intestine.

The protein resides in the basolateral cell membrane. It is found in the apical cell membrane. Its subcellular location is the lateral cell membrane. The protein localises to the basal cell membrane. The catalysed reaction is 1-methylnicotinamide(out) = 1-methylnicotinamide(in). The enzyme catalyses dopamine(out) = dopamine(in). It catalyses the reaction serotonin(out) = serotonin(in). It carries out the reaction (R)-adrenaline(out) = (R)-adrenaline(in). The catalysed reaction is (R)-noradrenaline(out) = (R)-noradrenaline(in). The enzyme catalyses histamine(out) = histamine(in). It catalyses the reaction guanidine(out) = guanidine(in). It carries out the reaction choline(out) = choline(in). The catalysed reaction is acetylcholine(in) = acetylcholine(out). The enzyme catalyses thiamine(in) = thiamine(out). It catalyses the reaction spermidine(in) = spermidine(out). It carries out the reaction agmatine(out) = agmatine(in). The catalysed reaction is putrescine(out) = putrescine(in). The enzyme catalyses (R)-carnitine(in) = (R)-carnitine(out). It catalyses the reaction O-isobutanoyl-(R)-carnitine(in) = O-isobutanoyl-(R)-carnitine(out). It carries out the reaction O-acetyl-(R)-carnitine(in) = O-acetyl-(R)-carnitine(out). The catalysed reaction is O-3-hydroxybutanoyl-(R)-carnitine(in) = O-3-hydroxybutanoyl-(R)-carnitine(out). The enzyme catalyses O-propanoyl-(R)-carnitine(in) = O-propanoyl-(R)-carnitine(out). It catalyses the reaction O-butanoyl-(R)-carnitine(in) = O-butanoyl-(R)-carnitine(out). It carries out the reaction O-2-methylbutanoyl-(R)-carnitine(in) = O-2-methylbutanoyl-(R)-carnitine(out). The catalysed reaction is O-3-methylbutanoyl-(R)-carnitine(in) = O-3-methylbutanoyl-(R)-carnitine(out). The enzyme catalyses O-hexanoyl-(R)-carnitine(in) = O-hexanoyl-(R)-carnitine(out). It catalyses the reaction L-histidyl-L-proline diketopiperazine(in) = L-histidyl-L-proline diketopiperazine(out). It carries out the reaction (R)-salsolinol(in) = (R)-salsolinol(out). The catalysed reaction is prostaglandin F2alpha(out) = prostaglandin F2alpha(in). The enzyme catalyses prostaglandin E2(out) = prostaglandin E2(in). With respect to regulation, phosphorylation of the transporter leads to changes in its substrate affinity, resulting in a regulation of the transport activity. In contrast with rat ortholog, ASP uptake is inhibited by protein kinase A (PKA) and C (PKC) activation. ASP uptake is also endogenously activated by calmodulin, the calmodulin-dependent kinase II and LCK tyrosine kinase. Inhibited by cGMP, most likely through a cGMP-binding protein that interacts with OCT1. Electrogenic voltage-dependent transporter that mediates the transport of a variety of organic cations such as endogenous bioactive amines, cationic drugs and xenobiotics. Functions as a pH- and Na(+)-independent, bidirectional transporter. Cation cellular uptake or release is driven by the electrochemical potential (i.e. membrane potential and concentration gradient) and substrate selectivity. Hydrophobicity is a major requirement for recognition in polyvalent substrates and inhibitors. Primarily expressed in the basolateral membrane of hepatocytes and proximal tubules and involved in the uptake and disposition of cationic compounds from the blood by hepatic and renal clearance. Most likely functions as an uptake carrier in enterocytes contributing to the intestinal elimination of organic cations from the systemic circulation. Transports endogenous monoamines such as N-1-methylnicotinamide (NMN), guanidine, neurotransmitters dopamine, serotonin, noradrenaline, adrenaline and histamine, and quaternary ammonium compound such as choline. Also transports natural polyamines such as spermidine, agmatine and putrescine at low affinity, but relatively high turnover. Involved in the hepatic and intestinal uptake of the vitamin B1/thiamine, hence regulating hepatic lipid and energy metabolism. Contributes to the influx and efflux of fatty acid carriers carnitines and acylcarnitines across the basolateral membrane of hepatocytes, from the liver to the systemic circulation and inversely and may be involved in regulating the systemic availability of hepatic acylcarnitines. Also capable of transporting non-amine endogenous compounds such as prostaglandin E2 (PGE2) and prostaglandin F2-alpha (PGF2-alpha). May contribute to the transport of cationic compounds in testes across the blood-testis-barrier. Also mediates the uptake of xenobiotics tributylmethylammonium (TBuMA), quinidine, N-methyl-quinine (NMQ), N-methyl-quinidine (NMQD) N-(4,4-azo-n-pentyl)-quinuclidine (APQ), azidoprocainamide methoiodide (AMP), N-(4,4-azo-n-pentyl)-21-deoxyajmalinium (APDA) and 4-(4-(dimethylamino)styryl)-N-methylpyridinium (ASP). The sequence is that of Solute carrier family 22 member 1 (SLC22A1) from Oryctolagus cuniculus (Rabbit).